The following is a 492-amino-acid chain: Variant surface glycoprotein MITAT 1.1 (492 aa).

The first 32 residues, 1 to 32 (MATGRAKNTKWARWLSTAGLIIVVTLPATTMA), serve as a signal peptide directing secretion. 2 disulfide bridges follow: Cys-47–Cys-177 and Cys-155–Cys-222. N-linked (GlcNAc...) asparagine glycans are attached at residues Asn-298 and Asn-471. Residue Ser-475 is the site of GPI-anchor amidated serine attachment. A propeptide spans 476 to 492 (NSFLIHKAPLLLAFLLF) (removed in mature form).

The protein localises to the cell membrane. Its function is as follows. VSG forms a coat on the surface of the parasite. The trypanosome evades the immune response of the host by expressing a series of antigenically distinct VSGs from an estimated 1000 VSG genes. The sequence is that of Variant surface glycoprotein MITAT 1.1 from Trypanosoma brucei brucei.